The chain runs to 677 residues: DNA ligase (677 aa).

Residues D35–D39, S84–L85, and E115 contribute to the NAD(+) site. K117 acts as the N6-AMP-lysine intermediate in catalysis. Residues R138, E177, K296, and K320 each coordinate NAD(+). 4 residues coordinate Zn(2+): C414, C417, C432, and C437. In terms of domain architecture, BRCT spans N599–E677.

It belongs to the NAD-dependent DNA ligase family. LigA subfamily. The cofactor is Mg(2+). It depends on Mn(2+) as a cofactor.

It carries out the reaction NAD(+) + (deoxyribonucleotide)n-3'-hydroxyl + 5'-phospho-(deoxyribonucleotide)m = (deoxyribonucleotide)n+m + AMP + beta-nicotinamide D-nucleotide.. Functionally, DNA ligase that catalyzes the formation of phosphodiester linkages between 5'-phosphoryl and 3'-hydroxyl groups in double-stranded DNA using NAD as a coenzyme and as the energy source for the reaction. It is essential for DNA replication and repair of damaged DNA. This Nostoc sp. (strain PCC 7120 / SAG 25.82 / UTEX 2576) protein is DNA ligase.